The following is a 278-amino-acid chain: Tryptophan synthase alpha chain (278 aa).

Residues glutamate 50 and aspartate 61 each act as proton acceptor in the active site.

Belongs to the TrpA family. Tetramer of two alpha and two beta chains.

It catalyses the reaction (1S,2R)-1-C-(indol-3-yl)glycerol 3-phosphate + L-serine = D-glyceraldehyde 3-phosphate + L-tryptophan + H2O. It functions in the pathway amino-acid biosynthesis; L-tryptophan biosynthesis; L-tryptophan from chorismate: step 5/5. Functionally, the alpha subunit is responsible for the aldol cleavage of indoleglycerol phosphate to indole and glyceraldehyde 3-phosphate. The protein is Tryptophan synthase alpha chain of Rhodopseudomonas palustris (strain HaA2).